Here is a 242-residue protein sequence, read N- to C-terminus: MTTFMNNKTKSAGFTFKQFHVSHDKCAMKVGTDGILLGAWASLQGNRYLDLGTGSGLIALMLAQRTQTDCHITGVEIDPSAYRQATENVRQSPWADKIQLEQQNIVDFTRTCTKKFDTVLSNPPYFEQGVDCRDKQRDTARYTQTLSHSDWLNLAADCLTNTGRIHLILPYAAGKNLQKQTALFCARCCEVITKSGKIPQRLLLTFSKQPCTTEQSRLVVYNEQNQYTEQFIALTRDFYLNF.

Belongs to the methyltransferase superfamily. tRNA (adenine-N(6)-)-methyltransferase family.

It is found in the cytoplasm. It catalyses the reaction adenosine(37) in tRNA1(Val) + S-adenosyl-L-methionine = N(6)-methyladenosine(37) in tRNA1(Val) + S-adenosyl-L-homocysteine + H(+). Functionally, specifically methylates the adenine in position 37 of tRNA(1)(Val) (anticodon cmo5UAC). The protein is tRNA1(Val) (adenine(37)-N6)-methyltransferase of Mannheimia succiniciproducens (strain KCTC 0769BP / MBEL55E).